The following is a 182-amino-acid chain: Urease accessory protein UreE (182 aa).

Residues 128-182 form a disordered region; sequence PRTEPFRPEGGAYGHGRTLGHDHGPAQGHGHDHPHVHVHISHKPDEDETPDADPA. Residues 146-162 are compositionally biased toward basic and acidic residues; the sequence is LGHDHGPAQGHGHDHPH. A compositionally biased stretch (acidic residues) spans 173–182; the sequence is EDETPDADPA.

The protein belongs to the UreE family.

The protein resides in the cytoplasm. Functionally, involved in urease metallocenter assembly. Binds nickel. Probably functions as a nickel donor during metallocenter assembly. This chain is Urease accessory protein UreE, found in Cereibacter sphaeroides (strain ATCC 17023 / DSM 158 / JCM 6121 / CCUG 31486 / LMG 2827 / NBRC 12203 / NCIMB 8253 / ATH 2.4.1.) (Rhodobacter sphaeroides).